The sequence spans 276 residues: Putative ABC transporter ATP-binding protein MA_4021 (276 aa).

The ABC transporter domain occupies 5 to 247; it reads FDLKNISYSY…DLNLLLSTNL (243 aa). 38–45 is an ATP binding site; that stretch reads GSNGSGKS.

It belongs to the ABC transporter superfamily.

The protein localises to the cell membrane. Probably part of an ABC transporter complex. Responsible for energy coupling to the transport system. The sequence is that of Putative ABC transporter ATP-binding protein MA_4021 from Methanosarcina acetivorans (strain ATCC 35395 / DSM 2834 / JCM 12185 / C2A).